The sequence spans 517 residues: Cytochrome P450 monooxygenase sdnE (517 aa).

The chain crosses the membrane as a helical span at residues 4 to 24; that stretch reads SSILQTLAVLYVLYLLGLIIY. Asparagine 111 carries an N-linked (GlcNAc...) asparagine glycan. Residues 219-239 form a helical membrane-spanning segment; sequence FPVVFIILGLSPRAMLKLVVP. Position 456 (cysteine 456) interacts with heme.

The protein belongs to the cytochrome P450 family. The cofactor is heme.

Its subcellular location is the membrane. The protein operates within antibiotic biosynthesis. Functionally, cytochrome P450 monooxygenase; part of the gene cluster that mediates the biosynthesis of sordarin and hypoxysordarin, glycoside antibiotics with a unique tetracyclic diterpene aglycone structure. First, the geranylgeranyl diphosphate synthase sdnC constructs GGDP from farnesyl diphosphate and isopentenyl diphosphate. The diterpene cyclase sdnA then catalyzes the cyclization of GGDP to afford cycloaraneosene. Cycloaraneosene is then hydroxylated four times by the putative cytochrome P450 monooxygenases sdnB, sdnE, sdnF and sdnH to give a hydroxylated cycloaraneosene derivative such as cycloaraneosene-8,9,13,19-tetraol. Although the order of the hydroxylations is unclear, at least C8, C9 and C13 of the cycloaraneosene skeleton are hydroxylated before the sordaricin formation. Dehydration of the 13-hydroxy group of the hydroxylated cycloaraneosene derivative might be catalyzed by an unassigned hypothetical protein such as sdnG and sdnP to construct the cyclopentadiene moiety. The FAD-dependent oxidoreductase sdnN is proposed to catalyze the oxidation at C9 of the hydroxylated cycloaraneosene derivative and also catalyze the Baeyer-Villiger oxidation to give the lactone intermediate. The presumed lactone intermediate would be hydrolyzed to give an acrolein moiety and a carboxylate moiety. Then, [4+2]cycloaddition would occur between the acrolein moiety and the cyclopentadiene moiety to give sordaricin. SdnN might also be involved in the [4+2]cycloaddition after the hypothesized oxidation to accommodate the oxidized product and prompt the [4+2]cycloaddition. GDP-6-deoxy-D-altrose may be biosynthesized from GDP-D-mannose by the putative GDP-mannose-4,6-dehydratase sdnI and the short-chain dehydrogenase sdnK. The glycosyltransferase sdnJ catalyzes the attachment of 6-deoxy-D-altrose onto the 19-hydroxy group of sordaricin to give 4'-O-demethylsordarin. The methyltransferase sdnD would complete the biosynthesis of sordarin. Sordarin can be further modified into hypoxysordarin. The unique acyl chain at the 3'-hydroxy group of hypoxysordarin would be constructed by an iterative type I PKS sdnO and the trans-acting polyketide methyltransferase sdnL. SdnL would be responsible for the introduction of an alpha-methyl group of the polyketide chain. Alternatively, the beta-lactamase-like protein sdnR might be responsible for the cleavage and transfer of the polyketide chain from the PKS sdnO to sordarin. Two putative cytochrome P450 monooxygenases, sdnQ and sdnT, might catalyze the epoxidations of the polyketide chain to complete the biosynthesis of hypoxysordarin. Transcriptional regulators sdnM and sdnS are presumably encoded for the transcriptional regulation of the expression of the sdn gene cluster. This is Cytochrome P450 monooxygenase sdnE from Sordaria araneosa (Pleurage araneosa).